The primary structure comprises 193 residues: Probable type II restriction enzyme HpyAORF263P (193 aa).

It belongs to the BsaWI type II restriction endonuclease family.

The catalysed reaction is Endonucleolytic cleavage of DNA to give specific double-stranded fragments with terminal 5'-phosphates.. Its function is as follows. A P subtype probable restriction enzyme that recognizes the double-stranded sequence CCGG; the cleavage site is unknown. This Helicobacter pylori (strain ATCC 700392 / 26695) (Campylobacter pylori) protein is Probable type II restriction enzyme HpyAORF263P.